A 327-amino-acid chain; its full sequence is tRNA N6-adenosine threonylcarbamoyltransferase (327 aa).

Positions 109 and 113 each coordinate Fe cation. Residues 132-136, Asp165, Gly178, Asp182, and Asn268 contribute to the substrate site; that span reads MVSGG. Fe cation is bound at residue Asp296.

This sequence belongs to the KAE1 / TsaD family. Fe(2+) is required as a cofactor.

The protein resides in the cytoplasm. The catalysed reaction is L-threonylcarbamoyladenylate + adenosine(37) in tRNA = N(6)-L-threonylcarbamoyladenosine(37) in tRNA + AMP + H(+). In terms of biological role, required for the formation of a threonylcarbamoyl group on adenosine at position 37 (t(6)A37) in tRNAs that read codons beginning with adenine. Is involved in the transfer of the threonylcarbamoyl moiety of threonylcarbamoyl-AMP (TC-AMP) to the N6 group of A37, together with TsaE and TsaB. TsaD likely plays a direct catalytic role in this reaction. This chain is tRNA N6-adenosine threonylcarbamoyltransferase, found in Thermotoga neapolitana (strain ATCC 49049 / DSM 4359 / NBRC 107923 / NS-E).